A 1729-amino-acid chain; its full sequence is Cullin-7 (1729 aa).

Residues 350 to 388 (DRPRSSARSPGSIFQPQLADVSPGLPATQAQPSFRRSRH) are disordered. Position 371 is a phosphoserine (serine 371). In terms of domain architecture, CPH spans 392–465 (RSEFASGNTY…HWHMLEILGF (74 aa)). Basic and acidic residues predominate over residues 632–642 (SEDAAKVEAKE). The disordered stretch occupies residues 632-654 (SEDAAKVEAKEPPSQSPNTPLQR). Positions 845–1024 (PINIPFFDVF…HTRLFYMVRA (180 aa)) constitute a DOC domain. Residues 1373–1405 (VGHGASGKEHKSEKEEEAGAAAAVDVAEGEEEE) form a disordered region. Lysine 1607 is covalently cross-linked (Glycyl lysine isopeptide (Lys-Gly) (interchain with G-Cter in NEDD8)).

It belongs to the cullin family. Component of the 3M complex, composed of core components CUL7, CCDC8 and OBSL1. Component of the Cul7-RING(FBXW8) complex consisting of CUL7, RBX1, SKP1 and FBXW8. Within the Cul7-RING(FBXW8) complex interacts with FBXW8 and RBX1, but not with SKP1. Interacts with CUL1 (via the C-terminal domain); the interaction seems to be mediated by FBXW8; it is likely specific to FBXW8, but not other F-box proteins. Interacts (via the CPH domain) with p53/TP53; the interaction preferentially involves tetrameric and dimeric p53/TP53; this interaction recruits p53/TP53 for ubiquitination by neddylated CUL1-RBX1. The CUL7-CUL9 heterodimer seems to interact specifically with p53/TP53. Interacts with FBXW8; interaction is mutually exclusive of binding to CUL9 or p53/TP53. Interacts with CUL9; leading to inhibited CUL9 activity. Interacts with OBSL1. Interacts (as part of the 3M complex) with HDAC4 and HDAC5; it is negatively regulated by ANKRA2.

Its subcellular location is the cytoplasm. The protein resides in the cytoskeleton. It is found in the microtubule organizing center. It localises to the centrosome. The protein localises to the perinuclear region. Its subcellular location is the golgi apparatus. The protein operates within protein modification; protein ubiquitination. Core component of the 3M and Cul7-RING(FBXW8) complexes, which mediate the ubiquitination and subsequent proteasomal degradation of target proteins. Core component of the 3M complex, a complex required to regulate microtubule dynamics and genome integrity. It is unclear how the 3M complex regulates microtubules, it could act by controlling the level of a microtubule stabilizer. The Cul7-RING(FBXW8) complex alone lacks ubiquitination activity and does not promote polyubiquitination and proteasomal degradation of p53/TP53. However it mediates recruitment of p53/TP53 for ubiquitination by neddylated CUL1-RBX1. Interaction with CUL9 is required to inhibit CUL9 activity and ubiquitination of BIRC5. The Cul7-RING(FBXW8) complex also mediates ubiquitination and consequent degradation of target proteins such as GORASP1, IRS1 and MAP4K1/HPK1. Ubiquitination of GORASP1 regulates Golgi morphogenesis and dendrite patterning in brain. Mediates ubiquitination and degradation of IRS1 in a mTOR-dependent manner: the Cul7-RING(FBXW8) complex recognizes and binds IRS1 previously phosphorylated by S6 kinase (RPS6KB1 or RPS6KB2). The Cul7-RING(FBXW8) complex also mediates ubiquitination of MAP4K1/HPK1: recognizes and binds autophosphorylated MAP4K1/HPK1, leading to its degradation, thereby affecting cell proliferation and differentiation. Acts as a regulator in trophoblast cell epithelial-mesenchymal transition and placental development. While the Cul7-RING(FBXW8) and the 3M complexes are associated and involved in common processes, CUL7 and the Cul7-RING(FBXW8) complex may have additional functions. Probably plays a role in the degradation of proteins involved in endothelial proliferation and/or differentiation. This chain is Cullin-7 (CUL7), found in Pongo abelii (Sumatran orangutan).